A 90-amino-acid chain; its full sequence is Putative septation protein SpoVG (90 aa).

It belongs to the SpoVG family.

Could be involved in septation. This chain is Putative septation protein SpoVG, found in Clostridium perfringens (strain SM101 / Type A).